The chain runs to 553 residues: Coiled-coil domain-containing protein 85A (553 aa).

Residues 1–28 (MSKAAGGAAAAAAAAESCSPAPAGSSAA) are compositionally biased toward low complexity. The interval 1–37 (MSKAAGGAAAAAAAAESCSPAPAGSSAAPPAPVEDLS) is disordered. Coiled coils occupy residues 43–109 (ELLQ…RDLC) and 137–169 (MHKE…KELC). Disordered stretches follow at residues 203-414 (YVRD…GMNE), 433-461 (ENRM…GWGS), and 491-518 (SGAD…QPEP). The segment covering 209-220 (DGSSTSSTGSTD) has biased composition (low complexity). Over residues 236-260 (HLQKPRSEGSPEHSKHRSASPEHPQ) the composition is skewed to basic and acidic residues. Gly residues predominate over residues 376-389 (GGSGGSGGSGGGSR). A compositionally biased stretch (basic and acidic residues) spans 391 to 403 (GTLRRQAQEDGSP). Positions 412–443 (MNESTLSYVRQLEARVRQLEEENRMLPQASQN) form a coiled coil. Positions 439-455 (QASQNRRQPPTRNSSNM) are enriched in polar residues. Low complexity predominate over residues 491 to 508 (SGADGSNSSPNSAASFSG). Residue R541 is modified to Asymmetric dimethylarginine.

This sequence belongs to the CCDC85 family. In terms of assembly, may interact with ARVCF; CTNND1; CTNND2 and PKP4.

The protein resides in the cell junction. Its subcellular location is the adherens junction. Its function is as follows. May play a role in cell-cell adhesion and epithelium development through its interaction with proteins of the beta-catenin family. The chain is Coiled-coil domain-containing protein 85A (CCDC85A) from Homo sapiens (Human).